The following is a 159-amino-acid chain: Serine-protein kinase RsbW (159 aa).

The protein belongs to the anti-sigma-factor family.

It catalyses the reaction L-seryl-[protein] + ATP = O-phospho-L-seryl-[protein] + ADP + H(+). It carries out the reaction L-threonyl-[protein] + ATP = O-phospho-L-threonyl-[protein] + ADP + H(+). In terms of biological role, negative regulator of sigma-B activity. Phosphorylates and inactivates its specific antagonist protein, RsbV. Upon phosphorylation of RsbV, RsbW is released and binds to sigma-B, thereby blocking its ability to form an RNA polymerase holoenzyme (E-sigma-B). This Staphylococcus epidermidis protein is Serine-protein kinase RsbW.